A 316-amino-acid chain; its full sequence is BTB/POZ domain-containing adapter for CUL3-mediated RhoA degradation protein 2 (316 aa).

A BTB domain is found at 28 to 96 (KYVQLNVGGS…LRDDTVTLPQ (69 aa)). Over residues 268 to 279 (EATSRSRSQASP) the composition is skewed to polar residues. The segment at 268–287 (EATSRSRSQASPSEDEDTFE) is disordered. The residue at position 278 (Ser278) is a Phosphoserine. Position 280 is a phosphoserine; by CK2 (Ser280).

It belongs to the BACURD family. In terms of assembly, component of the BCR(TNFAIP1) E3 ubiquitin ligase complex, at least composed of CUL3, TNFAIP1/BACURD2 and RBX1. Interacts with RHOA; with a preference for RhoA-GDP. Interacts with RHOB. Interacts with CSNK2B. Interacts with PCNA. Phosphorylation at Ser-280 by CK2 facilitates the nucleus localization and increases interaction with PCNA.

It localises to the cytoplasm. The protein resides in the nucleus. The protein localises to the endosome. It functions in the pathway protein modification; protein ubiquitination. Substrate-specific adapter of a BCR (BTB-CUL3-RBX1) E3 ubiquitin-protein ligase complex involved in regulation of cytoskeleton structure. The BCR(TNFAIP1) E3 ubiquitin ligase complex mediates the ubiquitination of RHOA, leading to its degradation by the proteasome, thereby regulating the actin cytoskeleton and cell migration. Its interaction with RHOB may regulate apoptosis. May enhance the PCNA-dependent DNA polymerase delta activity. The polypeptide is BTB/POZ domain-containing adapter for CUL3-mediated RhoA degradation protein 2 (Tnfaip1) (Rattus norvegicus (Rat)).